A 185-amino-acid chain; its full sequence is Monothiol glutaredoxin-S4, mitochondrial (185 aa).

A mitochondrion-targeting transit peptide spans 1 to 36 (MARLMSSALIRGLVRSSCSPTVAAVAQPTIHQFRNY). A disordered region spans residues 37–74 (SSGLGGDSTATGDSSSTRVAADPDTHQDFQPTTKSSNM). A compositionally biased stretch (low complexity) spans 43-53 (DSTATGDSSST). The span at 64 to 74 (DFQPTTKSSNM) shows a compositional bias: polar residues. A Glutaredoxin domain is found at 77 to 179 (DDIVSQDIKE…DVLGDIAQKR (103 aa)). Lys94 serves as a coordination point for glutathione. Cys102 serves as a coordination point for [2Fe-2S] cluster. Residues Lys131, Phe143, and 156-157 (SD) each bind glutathione.

Belongs to the glutaredoxin family. CGFS subfamily.

The protein resides in the mitochondrion. Functionally, may only reduce GSH-thiol disulfides, but not protein disulfides. In Oryza sativa subsp. japonica (Rice), this protein is Monothiol glutaredoxin-S4, mitochondrial (GRXS4).